Here is a 206-residue protein sequence, read N- to C-terminus: Large ribosomal subunit protein uL4 (206 aa).

Positions 63–97 (MYKQKGTGRARHHSARAPQFRGGGKAHGPVVRSHE) are disordered. The span at 64-77 (YKQKGTGRARHHSA) shows a compositional bias: basic residues.

Belongs to the universal ribosomal protein uL4 family. As to quaternary structure, part of the 50S ribosomal subunit.

Its function is as follows. One of the primary rRNA binding proteins, this protein initially binds near the 5'-end of the 23S rRNA. It is important during the early stages of 50S assembly. It makes multiple contacts with different domains of the 23S rRNA in the assembled 50S subunit and ribosome. In terms of biological role, forms part of the polypeptide exit tunnel. This is Large ribosomal subunit protein uL4 from Rhizobium etli (strain CIAT 652).